The sequence spans 243 residues: NH(3)-dependent NAD(+) synthetase (243 aa).

31 to 38 (GVSGGIDS) serves as a coordination point for ATP. Mg(2+) is bound at residue aspartate 37. Arginine 110 is a deamido-NAD(+) binding site. An ATP-binding site is contributed by threonine 130. Glutamate 135 contacts Mg(2+). Deamido-NAD(+) is bound by residues lysine 143 and aspartate 150. 2 residues coordinate ATP: lysine 159 and serine 181. 227–228 (HK) contacts deamido-NAD(+).

It belongs to the NAD synthetase family. Homodimer.

The enzyme catalyses deamido-NAD(+) + NH4(+) + ATP = AMP + diphosphate + NAD(+) + H(+). Its pathway is cofactor biosynthesis; NAD(+) biosynthesis; NAD(+) from deamido-NAD(+) (ammonia route): step 1/1. Catalyzes the ATP-dependent amidation of deamido-NAD to form NAD. Uses ammonia as a nitrogen source. The chain is NH(3)-dependent NAD(+) synthetase from Malacoplasma penetrans (strain HF-2) (Mycoplasma penetrans).